Reading from the N-terminus, the 148-residue chain is MLKSLIYELLKSSIKQEEHYYSKTFFYFLNILGLVFIIIANYCYSSDSMKFYFLMQIGIISVISSMVIEAVRCYLKYKNRYRHLDCLRSNSGVLVGSISKTLIDLFSTKTLIRYLPTIIRYVPSTVITFIICTYIKRKFLKNFMYYTR.

3 consecutive transmembrane segments (helical) span residues 20 to 42 (YYSK…IANY), 52 to 74 (YFLM…VRCY), and 118 to 135 (IIRY…CTYI).

It is found in the cell membrane. This is an uncharacterized protein from Rickettsia prowazekii (strain Madrid E).